A 955-amino-acid chain; its full sequence is Leucine--tRNA ligase (955 aa).

The 'HIGH' region motif lies at 51–61 (PYLNGVLHAGH). The 'KMSKS' region signature appears at 647–651 (KLSKS). K650 serves as a coordination point for ATP.

This sequence belongs to the class-I aminoacyl-tRNA synthetase family.

It is found in the cytoplasm. It catalyses the reaction tRNA(Leu) + L-leucine + ATP = L-leucyl-tRNA(Leu) + AMP + diphosphate. The sequence is that of Leucine--tRNA ligase from Methanococcus maripaludis (strain C5 / ATCC BAA-1333).